The following is a 251-amino-acid chain: Imidazole glycerol phosphate synthase subunit HisF (251 aa).

Active-site residues include aspartate 11 and aspartate 130.

It belongs to the HisA/HisF family. In terms of assembly, heterodimer of HisH and HisF.

It localises to the cytoplasm. The catalysed reaction is 5-[(5-phospho-1-deoxy-D-ribulos-1-ylimino)methylamino]-1-(5-phospho-beta-D-ribosyl)imidazole-4-carboxamide + L-glutamine = D-erythro-1-(imidazol-4-yl)glycerol 3-phosphate + 5-amino-1-(5-phospho-beta-D-ribosyl)imidazole-4-carboxamide + L-glutamate + H(+). Its pathway is amino-acid biosynthesis; L-histidine biosynthesis; L-histidine from 5-phospho-alpha-D-ribose 1-diphosphate: step 5/9. Functionally, IGPS catalyzes the conversion of PRFAR and glutamine to IGP, AICAR and glutamate. The HisF subunit catalyzes the cyclization activity that produces IGP and AICAR from PRFAR using the ammonia provided by the HisH subunit. This is Imidazole glycerol phosphate synthase subunit HisF from Chlorobium luteolum (strain DSM 273 / BCRC 81028 / 2530) (Pelodictyon luteolum).